The primary structure comprises 338 residues: Large ribosomal subunit protein uL10 (338 aa).

Residues 297-338 (PSAQQTQTQQSTAEEKKEEKKEEEKKGPSEEEIGSGLASLFG) are disordered. The segment covering 298–308 (SAQQTQTQQST) has biased composition (low complexity). Positions 309–325 (AEEKKEEKKEEEKKGPS) are enriched in basic and acidic residues.

This sequence belongs to the universal ribosomal protein uL10 family. Part of the 50S ribosomal subunit. Forms part of the ribosomal stalk which helps the ribosome interact with GTP-bound translation factors. Forms a heptameric L10(L12)2(L12)2(L12)2 complex, where L10 forms an elongated spine to which the L12 dimers bind in a sequential fashion.

Functionally, forms part of the ribosomal stalk, playing a central role in the interaction of the ribosome with GTP-bound translation factors. This is Large ribosomal subunit protein uL10 from Saccharolobus islandicus (strain M.14.25 / Kamchatka #1) (Sulfolobus islandicus).